We begin with the raw amino-acid sequence, 705 residues long: Phosphoribosylformylglycinamidine synthase subunit PurL (705 aa).

H32 is an active-site residue. Y35 contributes to the ATP binding site. Mg(2+) is bound at residue E76. Substrate-binding positions include S77–H80 and R99. H78 functions as the Proton acceptor in the catalytic mechanism. Mg(2+) is bound at residue D100. Q224 is a substrate binding site. Residue D252 coordinates Mg(2+). Position 296–298 (E296–Q298) interacts with substrate. ATP contacts are provided by D471 and G508. Mg(2+) is bound at residue N509. S511 is a substrate binding site.

This sequence belongs to the FGAMS family. As to quaternary structure, monomer. Part of the FGAM synthase complex composed of 1 PurL, 1 PurQ and 2 PurS subunits.

The protein resides in the cytoplasm. It catalyses the reaction N(2)-formyl-N(1)-(5-phospho-beta-D-ribosyl)glycinamide + L-glutamine + ATP + H2O = 2-formamido-N(1)-(5-O-phospho-beta-D-ribosyl)acetamidine + L-glutamate + ADP + phosphate + H(+). It participates in purine metabolism; IMP biosynthesis via de novo pathway; 5-amino-1-(5-phospho-D-ribosyl)imidazole from N(2)-formyl-N(1)-(5-phospho-D-ribosyl)glycinamide: step 1/2. In terms of biological role, part of the phosphoribosylformylglycinamidine synthase complex involved in the purines biosynthetic pathway. Catalyzes the ATP-dependent conversion of formylglycinamide ribonucleotide (FGAR) and glutamine to yield formylglycinamidine ribonucleotide (FGAM) and glutamate. The FGAM synthase complex is composed of three subunits. PurQ produces an ammonia molecule by converting glutamine to glutamate. PurL transfers the ammonia molecule to FGAR to form FGAM in an ATP-dependent manner. PurS interacts with PurQ and PurL and is thought to assist in the transfer of the ammonia molecule from PurQ to PurL. In Pyrococcus abyssi (strain GE5 / Orsay), this protein is Phosphoribosylformylglycinamidine synthase subunit PurL.